The primary structure comprises 75 residues: Guanine nucleotide-binding protein G(I)/G(S)/G(O) subunit gamma-3 (75 aa).

The residue at position 5 (Thr5) is a Phosphothreonine. Ser9 is subject to Phosphoserine. Thr10 is subject to Phosphothreonine. Ser12 is modified (phosphoserine). A Cysteine methyl ester modification is found at Cys72. Cys72 carries S-geranylgeranyl cysteine lipidation. The propeptide at 73-75 (ALL) is removed in mature form.

The protein belongs to the G protein gamma family. As to quaternary structure, g proteins are composed of 3 units, alpha, beta and gamma. Forms a complex with GNAO1 and GNB1. Interacts with SCN8A. In terms of tissue distribution, abundantly expressed in brain. Low levels in testis.

The protein localises to the cell membrane. In terms of biological role, guanine nucleotide-binding proteins (G proteins) are involved as a modulator or transducer in various transmembrane signaling systems. The beta and gamma chains are required for the GTPase activity, for replacement of GDP by GTP, and for G protein-effector interaction. This Bos taurus (Bovine) protein is Guanine nucleotide-binding protein G(I)/G(S)/G(O) subunit gamma-3 (GNG3).